The following is a 570-amino-acid chain: Urease subunit alpha (570 aa).

Positions 131–570 constitute a Urease domain; sequence GGFDSHIHFI…LPLAQRYFMF (440 aa). Ni(2+) is bound by residues histidine 136, histidine 138, and lysine 219. Lysine 219 carries the post-translational modification N6-carboxylysine. Residue histidine 221 coordinates substrate. Histidine 248 and histidine 274 together coordinate Ni(2+). The Proton donor role is filled by histidine 322. Aspartate 362 is a Ni(2+) binding site.

This sequence belongs to the metallo-dependent hydrolases superfamily. Urease alpha subunit family. As to quaternary structure, heterotrimer of UreA (gamma), UreB (beta) and UreC (alpha) subunits. Three heterotrimers associate to form the active enzyme. It depends on Ni cation as a cofactor. Carboxylation allows a single lysine to coordinate two nickel ions.

It is found in the cytoplasm. It catalyses the reaction urea + 2 H2O + H(+) = hydrogencarbonate + 2 NH4(+). It functions in the pathway nitrogen metabolism; urea degradation; CO(2) and NH(3) from urea (urease route): step 1/1. The polypeptide is Urease subunit alpha (Rhodopseudomonas palustris (strain TIE-1)).